Consider the following 96-residue polypeptide: Small ribosomal subunit protein bS6 (96 aa).

This sequence belongs to the bacterial ribosomal protein bS6 family.

Its function is as follows. Binds together with bS18 to 16S ribosomal RNA. This chain is Small ribosomal subunit protein bS6, found in Nocardioides sp. (strain ATCC BAA-499 / JS614).